The primary structure comprises 762 residues: Probable inorganic carbon transporter subunit DabA (762 aa).

Residues Cys-279, Asp-281, His-461, and Cys-476 each contribute to the Zn(2+) site.

This sequence belongs to the inorganic carbon transporter (TC 9.A.2) DabA family. In terms of assembly, forms a complex with DabB. The cofactor is Zn(2+).

Its subcellular location is the cell inner membrane. Part of an energy-coupled inorganic carbon pump. The protein is Probable inorganic carbon transporter subunit DabA of Legionella pneumophila subsp. pneumophila (strain Philadelphia 1 / ATCC 33152 / DSM 7513).